A 66-amino-acid polypeptide reads, in one-letter code: Large ribosomal subunit protein uL29 (66 aa).

Belongs to the universal ribosomal protein uL29 family.

This Bartonella quintana (strain Toulouse) (Rochalimaea quintana) protein is Large ribosomal subunit protein uL29.